A 370-amino-acid chain; its full sequence is Putative F-box/kelch-repeat protein At3g46050 (370 aa).

Residues 15 to 61 (PTSFSSLPDDIVLNCLARVSRFHYPTLSLVCKGFRSLLDSRELHATR) enclose the F-box domain. Kelch repeat units follow at residues 119–165 (KIYI…VIND) and 167–212 (IYVI…VPGS).

The protein is Putative F-box/kelch-repeat protein At3g46050 of Arabidopsis thaliana (Mouse-ear cress).